The primary structure comprises 114 residues: Flagellar hook-basal body complex protein FliE (114 aa).

The protein belongs to the FliE family.

Its subcellular location is the bacterial flagellum basal body. This chain is Flagellar hook-basal body complex protein FliE, found in Burkholderia vietnamiensis (strain G4 / LMG 22486) (Burkholderia cepacia (strain R1808)).